An 88-amino-acid chain; its full sequence is UPF0297 protein str1959 (88 aa).

This sequence belongs to the UPF0297 family.

This chain is UPF0297 protein str1959, found in Streptococcus thermophilus (strain CNRZ 1066).